Reading from the N-terminus, the 142-residue chain is Translation initiation factor 2 subunit beta (142 aa).

This sequence belongs to the eIF-2-beta/eIF-5 family. In terms of assembly, heterotrimer composed of an alpha, a beta and a gamma chain.

Its function is as follows. eIF-2 functions in the early steps of protein synthesis by forming a ternary complex with GTP and initiator tRNA. This Staphylothermus marinus (strain ATCC 43588 / DSM 3639 / JCM 9404 / F1) protein is Translation initiation factor 2 subunit beta.